We begin with the raw amino-acid sequence, 271 residues long: ABC transporter I family member 10 (271 aa).

The ABC transporter domain maps to 40 to 267 (VECRNLCFSV…IKAKQSSYID (228 aa)). Position 77–84 (77–84 (GPNGCGKS)) interacts with ATP.

This sequence belongs to the ABC transporter superfamily. ABCI family.

The protein is ABC transporter I family member 10 (ABCI10) of Arabidopsis thaliana (Mouse-ear cress).